Reading from the N-terminus, the 625-residue chain is Vicilin-like antimicrobial peptides 2-3 (625 aa).

Disordered stretches follow at residues 120–152 (QQKR…QQRE) and 180–212 (RQHG…NPYY). The segment covering 198–212 (RYEEGEEKQSDNPYY) has biased composition (basic and acidic residues). 2 Cupin type-1 domains span residues 230 to 369 (SVLE…ERLR) and 414 to 584 (YNLF…KEVE). The disordered stretch occupies residues 594–614 (IFFPGPRQHQQQSPRSTKQQQ). The segment covering 601–614 (QHQQQSPRSTKQQQ) has biased composition (low complexity).

It belongs to the 7S seed storage protein family.

It is found in the secreted. In terms of biological role, antimicrobial peptides 2b, 2c and 2d have antibacterial and antifungal activity against a range of species. The sequence is that of Vicilin-like antimicrobial peptides 2-3 from Macadamia integrifolia (Macadamia nut).